Here is a 271-residue protein sequence, read N- to C-terminus: Oxamate carbamoyltransferase subunit AllH (271 aa).

It belongs to the AllH family. The OXTCase is composed of 3 subunits, AllF, AllG and AllH. Requires Mg(2+) as cofactor.

It catalyses the reaction oxamate + carbamoyl phosphate = N-carbamoyl-2-oxoglycine + phosphate. The protein operates within nitrogen metabolism; (S)-allantoin degradation. Functionally, component of a carbamoyltransferase involved in the anaerobic nitrogen utilization via the assimilation of allantoin. Catalyzes the conversion of oxalurate (N-carbamoyl-2-oxoglycine) to oxamate and carbamoyl phosphate. The polypeptide is Oxamate carbamoyltransferase subunit AllH (Escherichia coli O157:H7).